The primary structure comprises 476 residues: Protein transport protein Sec61 subunit alpha isoform A (476 aa).

At 2–33 (GIKFLEVIKPFCAVLPEIQKPERKIQFREKVL) the chain is on the cytoplasmic side. The chain crosses the membrane as a helical span at residues 34 to 53 (WTAITLFIFLVCCQIPLFGI). Residues 54–76 (MSSDSADPFYWMRVILASNRGTL) are Lumenal-facing. Residues 77–96 (MELGISPIVTSGLIMQLLAG) traverse the membrane as a helical segment. At 97-117 (AKIIEVGDTPKDRALFNGAQK) the chain is on the cytoplasmic side. The chain crosses the membrane as a helical span at residues 118 to 138 (LFGMIITIGQSIVYVMTGMYG). Residues 139–144 (DPSEMG) lie on the Lumenal side of the membrane. A helical transmembrane segment spans residues 145 to 165 (AGICLLIIIQLFVAGLIVLLL). Residues 166-172 (DELLQKG) lie on the Cytoplasmic side of the membrane. The chain crosses the membrane as a helical span at residues 173–193 (YGLGSGISLFIATNICETIVW). Topologically, residues 194–240 (KAFSPTTVNTGRGTEFEGAIIALFHLLATRTDKVRALREAFYRQNLP) are lumenal. A helical transmembrane segment spans residues 241 to 261 (NLLNLIATVFVFAVVIYFQGF). Over 262 to 288 (RVDLPIKSARYRGQYNTYPIKLFYTSN) the chain is Cytoplasmic. The chain crosses the membrane as a helical span at residues 289-309 (IPIILQSALVSNLYVISQMLS). Residues 310–354 (TRFSGNFLVNLLGTWSDTSTGGPARAYPVGGLCYFLSPPESFGSV) lie on the Lumenal side of the membrane. The chain crosses the membrane as a helical span at residues 355-375 (LDDPIHAAIYIVFMLGSCAFF). Residues 376 to 420 (SKTWIEVSGSSAKDVAKQLKEQQMVMGGHRETSMVHELNRYIPTA) are Cytoplasmic-facing. A helical membrane pass occupies residues 421–441 (AAFGGLCIGGLSVMADFLGAI). Residues 442–445 (GSGT) lie on the Lumenal side of the membrane. The chain crosses the membrane as a helical span at residues 446 to 462 (GILLAVTIIYQYFEIFV). Over 463–476 (KEQSEMGSMGALLF) the chain is Cytoplasmic.

The protein belongs to the SecY/SEC61-alpha family. The SEC61 channel-forming translocon complex consists of channel-forming core components SEC61A1, SEC61B and SEC61G and different auxiliary components such as SEC62 and SEC63. The SEC61 channel associates with the multi-pass translocon (MPT) complex.

The protein localises to the endoplasmic reticulum membrane. Component of SEC61 channel-forming translocon complex that mediates transport of signal peptide-containing precursor polypeptides across the endoplasmic reticulum (ER). Forms a ribosome receptor and a gated pore in the ER membrane, both functions required for cotranslational translocation of nascent polypeptides. May cooperate with auxiliary protein SEC62, SEC63 and HSPA5/BiP to enable post-translational transport of small presecretory proteins. The SEC61 channel is also involved in ER membrane insertion of transmembrane proteins: it mediates membrane insertion of the first few transmembrane segments of proteins, while insertion of subsequent transmembrane regions of multi-pass membrane proteins is mediated by the multi-pass translocon (MPT) complex. This Oncorhynchus mykiss (Rainbow trout) protein is Protein transport protein Sec61 subunit alpha isoform A (sec61aa).